A 132-amino-acid polypeptide reads, in one-letter code: Fatty acid-binding protein type 3 (132 aa).

This sequence belongs to the calycin superfamily. Fatty-acid binding protein (FABP) family.

The sequence is that of Fatty acid-binding protein type 3 from Fasciola hepatica (Liver fluke).